A 275-amino-acid polypeptide reads, in one-letter code: Esterase AAEL000016 (275 aa).

Positions 1–21 (MMANETAAKSTKSSPTPAVEP) are disordered. The segment covering 7 to 16 (AAKSTKSSPT) has biased composition (polar residues). Residues Ser129, Asp187, and His214 each act as charge relay system in the active site. The disordered stretch occupies residues 253–275 (LVDDSGPAGNGVHDDDDDDDDSD). A compositionally biased stretch (acidic residues) spans 266 to 275 (DDDDDDDDSD).

This sequence belongs to the LovG family.

This Aedes aegypti (Yellowfever mosquito) protein is Esterase AAEL000016.